Consider the following 164-residue polypeptide: R-phycoerythrin alpha chain (164 aa).

(2R,3E)-phycoerythrobilin contacts are provided by N47, K81, C82, R84, H88, R137, C139, and R142.

It belongs to the phycobiliprotein family. In terms of assembly, heterododecamer of 6 alpha and 6 beta chains. The basic functional unit of phycobiliproteins is a ring-shaped hexamer formed from two back-to-back trimers contacting via the alpha chain subunits. The trimers are composed of alpha/beta subunit heterodimers arranged around a three-fold axis of symmetry. The phycoerythrins also contain a gamma subunit which is located in the center of the hexamer. Post-translationally, contains two covalently linked phycoerythrobilin chromophores. In PubMed:8876649 the authors refer to the bilins as phycoerythrobilins. In the PDB entries, the bilins are named as phycocyanobilins although the modeled compounds correspond to phycoerythrobilins.

It is found in the plastid. It localises to the chloroplast thylakoid membrane. Light-harvesting photosynthetic tetrapyrrole chromophore-protein from the phycobiliprotein complex. In Polysiphonia urceolata (Red alga), this protein is R-phycoerythrin alpha chain (cpeA).